An 840-amino-acid polypeptide reads, in one-letter code: Leucine--tRNA ligase (840 aa).

Residues 44–55 (PYPSANGLHVGH) carry the 'HIGH' region motif. The short motif at 617–621 (KMSKS) is the 'KMSKS' region element. Residue K620 coordinates ATP.

This sequence belongs to the class-I aminoacyl-tRNA synthetase family.

The protein localises to the cytoplasm. The catalysed reaction is tRNA(Leu) + L-leucine + ATP = L-leucyl-tRNA(Leu) + AMP + diphosphate. The polypeptide is Leucine--tRNA ligase (Borrelia garinii subsp. bavariensis (strain ATCC BAA-2496 / DSM 23469 / PBi) (Borreliella bavariensis)).